The primary structure comprises 93 residues: Protein YzgL (93 aa).

In Escherichia coli (strain K12), this protein is Protein YzgL (yzgL).